Consider the following 544-residue polypeptide: Chaperonin GroEL 2 (544 aa).

Residues 29–32, 86–90, Gly-413, 479–481, and Asp-495 contribute to the ATP site; these read TLGP, DGTTT, and NAA.

It belongs to the chaperonin (HSP60) family. In terms of assembly, forms a cylinder of 14 subunits composed of two heptameric rings stacked back-to-back. Interacts with the co-chaperonin GroES.

The protein localises to the cytoplasm. It catalyses the reaction ATP + H2O + a folded polypeptide = ADP + phosphate + an unfolded polypeptide.. In terms of biological role, together with its co-chaperonin GroES, plays an essential role in assisting protein folding. The GroEL-GroES system forms a nano-cage that allows encapsulation of the non-native substrate proteins and provides a physical environment optimized to promote and accelerate protein folding. In Prochlorococcus marinus subsp. pastoris (strain CCMP1986 / NIES-2087 / MED4), this protein is Chaperonin GroEL 2.